The sequence spans 478 residues: Aspartyl/glutamyl-tRNA(Asn/Gln) amidotransferase subunit B 1 (478 aa).

Belongs to the GatB/GatE family. GatB subfamily. In terms of assembly, heterotrimer of A, B and C subunits.

The catalysed reaction is L-glutamyl-tRNA(Gln) + L-glutamine + ATP + H2O = L-glutaminyl-tRNA(Gln) + L-glutamate + ADP + phosphate + H(+). It catalyses the reaction L-aspartyl-tRNA(Asn) + L-glutamine + ATP + H2O = L-asparaginyl-tRNA(Asn) + L-glutamate + ADP + phosphate + 2 H(+). In terms of biological role, allows the formation of correctly charged Asn-tRNA(Asn) or Gln-tRNA(Gln) through the transamidation of misacylated Asp-tRNA(Asn) or Glu-tRNA(Gln) in organisms which lack either or both of asparaginyl-tRNA or glutaminyl-tRNA synthetases. The reaction takes place in the presence of glutamine and ATP through an activated phospho-Asp-tRNA(Asn) or phospho-Glu-tRNA(Gln). The chain is Aspartyl/glutamyl-tRNA(Asn/Gln) amidotransferase subunit B 1 from Syntrophus aciditrophicus (strain SB).